The chain runs to 356 residues: Glucan endo-1,3-beta-glucosidase, acidic isoform GL153 (356 aa).

The signal sequence occupies residues 1-29 (MALCIKNGFLAAALVLVGLLMCSIQMIGA). Gln-30 is subject to Pyrrolidone carboxylic acid. Asn-95 carries N-linked (GlcNAc...) asparagine glycosylation. Glu-124 functions as the Proton donor in the catalytic mechanism. The active-site Nucleophile is Glu-264.

Belongs to the glycosyl hydrolase 17 family. As to expression, is expressed primarily in epidermal cell of healthy plant, and following induction by ethylene, accumulates in mesophyll cells.

Its subcellular location is the secreted. It localises to the extracellular space. The enzyme catalyses Hydrolysis of (1-&gt;3)-beta-D-glucosidic linkages in (1-&gt;3)-beta-D-glucans.. In terms of biological role, is thought to be an important plant defense-related product against fungal pathogens. This chain is Glucan endo-1,3-beta-glucosidase, acidic isoform GL153 (GGL4), found in Nicotiana tabacum (Common tobacco).